We begin with the raw amino-acid sequence, 630 residues long: Transposase B from transposon Tn554 (630 aa).

The 87-residue stretch at 216-302 (TYFKQLVKRY…ILEGLFSTLL (87 aa)) folds into the Core-binding (CB) domain. Residues 326 to 513 (AKPRFIDEFV…FDETLKNEFT (188 aa)) form the Tyr recombinase domain. Residues Arg-363, Lys-391, His-465, Arg-468, and His-491 contribute to the active site. Tyr-500 serves as the catalytic O-(3'-phospho-DNA)-tyrosine intermediate.

It belongs to the 'phage' integrase family.

In terms of biological role, one of three proteins encoded by transposon Tn554 required for its transposition. The sequence is that of Transposase B from transposon Tn554 (tnpB1) from Staphylococcus aureus (strain Mu50 / ATCC 700699).